The chain runs to 498 residues: Aldehyde dehydrogenase, mitochondrial (498 aa).

Residues M1 to L9 constitute a mitochondrion transit peptide. G242–G247 serves as a coordination point for NAD(+). E265 functions as the Proton acceptor in the catalytic mechanism. Catalysis depends on C299, which acts as the Nucleophile.

It belongs to the aldehyde dehydrogenase family.

The protein resides in the mitochondrion. It catalyses the reaction an aldehyde + NAD(+) + H2O = a carboxylate + NADH + 2 H(+). It functions in the pathway alcohol metabolism; ethanol degradation; acetate from ethanol: step 2/2. In terms of biological role, could have an RNA-binding activity in addition of its catalytic role. The protein is Aldehyde dehydrogenase, mitochondrial (ALDH2) of Leishmania tarentolae (Sauroleishmania tarentolae).